The primary structure comprises 373 residues: Queuine tRNA-ribosyltransferase (373 aa).

The Proton acceptor role is filled by Asp89. Substrate contacts are provided by residues 89-93 (DSGGF), Asp143, Gln192, and Gly220. Positions 251-257 (GVGTPED) are RNA binding. Asp270 acts as the Nucleophile in catalysis. An RNA binding; important for wobble base 34 recognition region spans residues 275 to 279 (TRNAR). Positions 308, 310, 313, and 339 each coordinate Zn(2+).

It belongs to the queuine tRNA-ribosyltransferase family. As to quaternary structure, homodimer. Within each dimer, one monomer is responsible for RNA recognition and catalysis, while the other monomer binds to the replacement base PreQ1. Zn(2+) serves as cofactor.

The enzyme catalyses 7-aminomethyl-7-carbaguanine + guanosine(34) in tRNA = 7-aminomethyl-7-carbaguanosine(34) in tRNA + guanine. It participates in tRNA modification; tRNA-queuosine biosynthesis. Catalyzes the base-exchange of a guanine (G) residue with the queuine precursor 7-aminomethyl-7-deazaguanine (PreQ1) at position 34 (anticodon wobble position) in tRNAs with GU(N) anticodons (tRNA-Asp, -Asn, -His and -Tyr). Catalysis occurs through a double-displacement mechanism. The nucleophile active site attacks the C1' of nucleotide 34 to detach the guanine base from the RNA, forming a covalent enzyme-RNA intermediate. The proton acceptor active site deprotonates the incoming PreQ1, allowing a nucleophilic attack on the C1' of the ribose to form the product. After dissociation, two additional enzymatic reactions on the tRNA convert PreQ1 to queuine (Q), resulting in the hypermodified nucleoside queuosine (7-(((4,5-cis-dihydroxy-2-cyclopenten-1-yl)amino)methyl)-7-deazaguanosine). This chain is Queuine tRNA-ribosyltransferase, found in Aliarcobacter butzleri (strain RM4018) (Arcobacter butzleri).